A 125-amino-acid polypeptide reads, in one-letter code: Small ribosomal subunit protein uS13 (125 aa).

The interval Arg92–Lys125 is disordered. The span at Arg107–Lys125 shows a compositional bias: basic residues.

This sequence belongs to the universal ribosomal protein uS13 family. As to quaternary structure, part of the 30S ribosomal subunit. Forms a loose heterodimer with protein S19. Forms two bridges to the 50S subunit in the 70S ribosome.

Functionally, located at the top of the head of the 30S subunit, it contacts several helices of the 16S rRNA. In the 70S ribosome it contacts the 23S rRNA (bridge B1a) and protein L5 of the 50S subunit (bridge B1b), connecting the 2 subunits; these bridges are implicated in subunit movement. Contacts the tRNAs in the A and P-sites. The protein is Small ribosomal subunit protein uS13 of Chlorobium phaeobacteroides (strain DSM 266 / SMG 266 / 2430).